Here is a 426-residue protein sequence, read N- to C-terminus: MSSAPKLFRVIGGAQNYDWGKLGSTSAVARFAKLNDPENVSIEEEKPYAELWMGTHPSVPTVSAQDRTPLRDLVRAAPEEMLGQDIIDKFGSKEGIPFLFKVLSIRKVLSIQAHPDKALARQLHASDPKHYPDDNHKPEMAVAITDFEAFCGFKPLAEIDALLQKIPEFRELVGDDVVAEFHSGIDSSDVAGKKKLLQKVFSRVMNSPESKFEPLAARLVERTKSDPQLFGETLADLIQRLDAQFPNDIGLFCGCLLLNHCILKSGEAMFLEAKDPHAYISGDIMECMAASDNVIRAGFTPKFKDVEVLVDCLTYSFNPVEEQKLKPAPFPRGTGVAELKLYDPPIDEFSVLQTTFTSAGAEKFEGLDGPSLLIVTEGKGKIKLQGSDEALDASTGNIFFVAPKAAIELVSESKDTFTSYRAFCEA.

Zn(2+)-binding residues include Q112, H114, E139, and H277. Residue R296 is part of the active site.

It belongs to the mannose-6-phosphate isomerase type 1 family. Requires Zn(2+) as cofactor.

Its subcellular location is the cytoplasm. It carries out the reaction D-mannose 6-phosphate = D-fructose 6-phosphate. It participates in nucleotide-sugar biosynthesis; GDP-alpha-D-mannose biosynthesis; alpha-D-mannose 1-phosphate from D-fructose 6-phosphate: step 1/2. In terms of biological role, involved in the synthesis of the GDP-mannose and dolichol-phosphate-mannose required for a number of critical mannosyl transfer reactions. The protein is Mannose-6-phosphate isomerase (PMI40) of Ogataea parapolymorpha (strain ATCC 26012 / BCRC 20466 / JCM 22074 / NRRL Y-7560 / DL-1) (Yeast).